We begin with the raw amino-acid sequence, 199 residues long: Outer-membrane lipoprotein LolB (199 aa).

The N-terminal stretch at 1–28 is a signal peptide; it reads MSACPAPRSPVRWLHAFTLFLLLAVLAG. Cys29 carries the N-palmitoyl cysteine lipid modification. Residue Cys29 is the site of S-diacylglycerol cysteine attachment.

Belongs to the LolB family. Monomer.

The protein resides in the cell outer membrane. Functionally, plays a critical role in the incorporation of lipoproteins in the outer membrane after they are released by the LolA protein. This chain is Outer-membrane lipoprotein LolB, found in Bordetella pertussis (strain Tohama I / ATCC BAA-589 / NCTC 13251).